We begin with the raw amino-acid sequence, 353 residues long: MLARAARGTGALLLRGSVQASGRIPRRASSGLPRNTVILFVPQQEAWVVERMGRFHRILEPGLNVLIPVLDRIRYVQSLKEIVINVPEQSAVTLDNVTLQIDGVLYLRIMDPYKASYGVEDPEYAVTQLAQTTMRSELGKLSLDKVFRERESLNANIVDAINQAADCWGIRCLRYEIKDIHVPPRVKESMQMQVEAERRKRATVLESEGTRESAINVAEGKKQAQILASEAEKAEQINQAAGEASAVLAKAKAKAEAIRILAGALTQHNGDAAASLTVAEQYVSAFSKLAKDSNTVLLPSNPSDVTSMVAQAMGVYGALTKAPVPGAQNSSEARRDVQTTDTSIEELGRVKLS.

The N-terminal 28 residues, 1 to 28 (MLARAARGTGALLLRGSVQASGRIPRRA), are a transit peptide targeting the mitochondrion. The residue at position 17 (Ser-17) is a Phosphoserine; by PKC/PRKCZ. Tyr-124 is subject to Phosphotyrosine. Lys-145 is modified (N6-acetyllysine; alternate). N6-succinyllysine; alternate is present on Lys-145. Residues 215 to 252 (INVAEGKKQAQILASEAEKAEQINQAAGEASAVLAKAK) adopt a coiled-coil conformation. Position 233 is an N6-acetyllysine (Lys-233). A disordered region spans residues 324-353 (VPGAQNSSEARRDVQTTDTSIEELGRVKLS). Ser-330 is subject to Phosphoserine.

The protein belongs to the band 7/mec-2 family. As to quaternary structure, forms homooligomers. Interacts with MFN2; may form heterooligomers. Interacts with PHB1 and PHB2; recruits them to cardiolipin-enriched mitochondrial membranes and stabilizes them. Interacts with CACNA2D2.

It is found in the cell membrane. It localises to the mitochondrion. The protein localises to the mitochondrion inner membrane. Its subcellular location is the mitochondrion intermembrane space. The protein resides in the membrane raft. It is found in the cytoplasm. It localises to the cytoskeleton. Its function is as follows. Mitochondrial protein that probably regulates the biogenesis and the activity of mitochondria. Stimulates cardiolipin biosynthesis, binds cardiolipin-enriched membranes where it recruits and stabilizes some proteins including prohibitin and may therefore act in the organization of functional microdomains in mitochondrial membranes. Through regulation of the mitochondrial function may play a role into several biological processes including cell migration, cell proliferation, T-cell activation, calcium homeostasis and cellular response to stress. May play a role in calcium homeostasis through negative regulation of calcium efflux from mitochondria. Required for mitochondrial hyperfusion a pro-survival cellular response to stress which results in increased ATP production by mitochondria. May also regulate the organization of functional domains at the plasma membrane and play a role in T-cell activation through association with the T-cell receptor signaling complex and its regulation. The sequence is that of Stomatin-like protein 2, mitochondrial (Stoml2) from Rattus norvegicus (Rat).